Reading from the N-terminus, the 272-residue chain is Dermonecrotic toxin LvSicTox-alphaIC1aiii (272 aa).

Histidine 4 is an active-site residue. Mg(2+) is bound by residues glutamate 24 and aspartate 26. Histidine 40 acts as the Nucleophile in catalysis. 2 disulfide bridges follow: cysteine 44–cysteine 50 and cysteine 46–cysteine 189. Aspartate 84 is a Mg(2+) binding site.

This sequence belongs to the arthropod phospholipase D family. Class II subfamily. The cofactor is Mg(2+). In terms of tissue distribution, expressed by the venom gland.

It localises to the secreted. It carries out the reaction an N-(acyl)-sphingosylphosphocholine = an N-(acyl)-sphingosyl-1,3-cyclic phosphate + choline. It catalyses the reaction an N-(acyl)-sphingosylphosphoethanolamine = an N-(acyl)-sphingosyl-1,3-cyclic phosphate + ethanolamine. The enzyme catalyses a 1-acyl-sn-glycero-3-phosphocholine = a 1-acyl-sn-glycero-2,3-cyclic phosphate + choline. The catalysed reaction is a 1-acyl-sn-glycero-3-phosphoethanolamine = a 1-acyl-sn-glycero-2,3-cyclic phosphate + ethanolamine. Dermonecrotic toxins cleave the phosphodiester linkage between the phosphate and headgroup of certain phospholipids (sphingolipid and lysolipid substrates), forming an alcohol (often choline) and a cyclic phosphate. This toxin acts on sphingomyelin (SM). It may also act on ceramide phosphoethanolamine (CPE), lysophosphatidylcholine (LPC) and lysophosphatidylethanolamine (LPE), but not on lysophosphatidylserine (LPS), and lysophosphatidylglycerol (LPG). It acts by transphosphatidylation, releasing exclusively cyclic phosphate products as second products. Induces dermonecrosis, hemolysis, increased vascular permeability, edema, inflammatory response, and platelet aggregation. The sequence is that of Dermonecrotic toxin LvSicTox-alphaIC1aiii from Loxosceles variegata (Recluse spider).